The sequence spans 547 residues: Aspartate 1-decarboxylase (547 aa).

Residue K338 is modified to N6-(pyridoxal phosphate)lysine.

It belongs to the group II decarboxylase family. Requires pyridoxal 5'-phosphate as cofactor.

The enzyme catalyses L-aspartate + H(+) = beta-alanine + CO2. It functions in the pathway cofactor biosynthesis; (R)-pantothenate biosynthesis; beta-alanine from L-aspartate: step 1/1. Functionally, catalyzes the pyridoxal-dependent decarboxylation of aspartate to produce beta-alanine. Has weak activity with glutamate. This Aliivibrio fischeri (strain ATCC 700601 / ES114) (Vibrio fischeri) protein is Aspartate 1-decarboxylase.